The following is a 70-amino-acid chain: Large ribosomal subunit protein bL31 (70 aa).

Zn(2+) contacts are provided by Cys16, Cys18, Cys37, and Cys40.

It belongs to the bacterial ribosomal protein bL31 family. Type A subfamily. In terms of assembly, part of the 50S ribosomal subunit. Zn(2+) serves as cofactor.

In terms of biological role, binds the 23S rRNA. The sequence is that of Large ribosomal subunit protein bL31 from Actinobacillus pleuropneumoniae serotype 5b (strain L20).